Here is a 135-residue protein sequence, read N- to C-terminus: Small ribosomal subunit protein bS6 (135 aa).

The disordered stretch occupies residues 104-135 (FSRLDRNGHIGHDEKHPRSPSRQREDVIEGVE).

It belongs to the bacterial ribosomal protein bS6 family.

Functionally, binds together with bS18 to 16S ribosomal RNA. The polypeptide is Small ribosomal subunit protein bS6 (Bartonella henselae (strain ATCC 49882 / DSM 28221 / CCUG 30454 / Houston 1) (Rochalimaea henselae)).